Reading from the N-terminus, the 346-residue chain is Ribonucleoside-diphosphate reductase subunit beta (346 aa).

Fe cation is bound by residues Glu89, Glu120, and His123. The active site involves Tyr129. Fe cation contacts are provided by Glu193, Glu227, and His230.

This sequence belongs to the ribonucleoside diphosphate reductase small chain family. In terms of assembly, tetramer of two alpha and two beta subunits. Fe cation serves as cofactor.

The enzyme catalyses a 2'-deoxyribonucleoside 5'-diphosphate + [thioredoxin]-disulfide + H2O = a ribonucleoside 5'-diphosphate + [thioredoxin]-dithiol. In terms of biological role, provides the precursors necessary for DNA synthesis. Catalyzes the biosynthesis of deoxyribonucleotides from the corresponding ribonucleotides. The sequence is that of Ribonucleoside-diphosphate reductase subunit beta (nrdB) from Chlamydia pneumoniae (Chlamydophila pneumoniae).